We begin with the raw amino-acid sequence, 277 residues long: 2-dehydro-3-deoxyphosphooctonate aldolase (277 aa).

The protein belongs to the KdsA family.

It localises to the cytoplasm. It carries out the reaction D-arabinose 5-phosphate + phosphoenolpyruvate + H2O = 3-deoxy-alpha-D-manno-2-octulosonate-8-phosphate + phosphate. The protein operates within carbohydrate biosynthesis; 3-deoxy-D-manno-octulosonate biosynthesis; 3-deoxy-D-manno-octulosonate from D-ribulose 5-phosphate: step 2/3. It functions in the pathway bacterial outer membrane biogenesis; lipopolysaccharide biosynthesis. In Dichelobacter nodosus (strain VCS1703A), this protein is 2-dehydro-3-deoxyphosphooctonate aldolase.